Here is a 320-residue protein sequence, read N- to C-terminus: ATP-dependent 6-phosphofructokinase (320 aa).

Residue glycine 11 participates in ATP binding. 21-25 (RAIAR) contacts ADP. ATP is bound by residues 72–73 (RF) and 102–105 (GDGS). Residue aspartate 103 participates in Mg(2+) binding. Substrate contacts are provided by residues 125–127 (TID), arginine 162, and 169–171 (MGR). Aspartate 127 functions as the Proton acceptor in the catalytic mechanism. ADP-binding positions include 185–187 (GAD) and 213–215 (KDH). Substrate is bound by residues glutamate 222, arginine 243, and 249–252 (HIQR).

Belongs to the phosphofructokinase type A (PFKA) family. ATP-dependent PFK group I subfamily. Prokaryotic clade 'B1' sub-subfamily. As to quaternary structure, homotetramer. The cofactor is Mg(2+).

The protein resides in the cytoplasm. It catalyses the reaction beta-D-fructose 6-phosphate + ATP = beta-D-fructose 1,6-bisphosphate + ADP + H(+). The protein operates within carbohydrate degradation; glycolysis; D-glyceraldehyde 3-phosphate and glycerone phosphate from D-glucose: step 3/4. With respect to regulation, allosterically activated by ADP and other diphosphonucleosides, and allosterically inhibited by phosphoenolpyruvate. In terms of biological role, catalyzes the phosphorylation of D-fructose 6-phosphate to fructose 1,6-bisphosphate by ATP, the first committing step of glycolysis. This chain is ATP-dependent 6-phosphofructokinase, found in Ligilactobacillus salivarius (strain UCC118) (Lactobacillus salivarius).